The chain runs to 119 residues: Nucleoid-associated protein Cphy_0047 (119 aa).

A disordered region spans residues 23–45 (AQRMQKQMEDKTKEMEEKQWEAT). The segment covering 28–42 (KQMEDKTKEMEEKQW) has biased composition (basic and acidic residues).

Belongs to the YbaB/EbfC family. Homodimer.

The protein localises to the cytoplasm. It is found in the nucleoid. Binds to DNA and alters its conformation. May be involved in regulation of gene expression, nucleoid organization and DNA protection. The polypeptide is Nucleoid-associated protein Cphy_0047 (Lachnoclostridium phytofermentans (strain ATCC 700394 / DSM 18823 / ISDg) (Clostridium phytofermentans)).